We begin with the raw amino-acid sequence, 288 residues long: Transmembrane protein 163 (288 aa).

The span at Met-1–Ser-11 shows a compositional bias: basic and acidic residues. The segment at Met-1–Glu-64 is disordered. Residues Met-1–Ala-87 are Cytoplasmic-facing. Ser-11 bears the Phosphoserine mark. Residues Pro-12–Gly-24 show a composition bias toward pro residues. The span at His-25–Ser-42 shows a compositional bias: low complexity. The interval Ser-41–Ser-71 is required for interaction with MCOLN1. Residues Ser-54, Ser-56, and Ser-60 each carry the phosphoserine modification. The chain crosses the membrane as a helical span at residues Leu-88–Val-108. Residues Ser-109–Ala-115 are Extracellular-facing. Residues Ser-116 to Trp-136 form a helical membrane-spanning segment. At Arg-137 to Arg-149 the chain is on the cytoplasmic side. Residues Glu-150–Val-170 traverse the membrane as a helical segment. The Extracellular segment spans residues Lys-171–Asp-186. A helical transmembrane segment spans residues Phe-187 to Phe-207. The Cytoplasmic portion of the chain corresponds to Met-208–Arg-216. Residues Ala-217–Leu-237 form a helical membrane-spanning segment. Topologically, residues Ser-238–Ser-254 are extracellular. The helical transmembrane segment at Ile-255 to Val-275 threads the bilayer. Over Pro-276–Glu-288 the chain is Cytoplasmic.

Belongs to the TMEM163 family. In terms of assembly, homodimer. Interacts with MCOLN1. Interacts with SLC30A1, SLC30A2, SLC30A3 and SLC30A4. In terms of tissue distribution, strongly expressed in brain. Also detected in lung, liver, kidney and spleen. Mainly expressed in the glutaminergic neuron subpopulations.

It localises to the cytoplasmic vesicle. The protein resides in the secretory vesicle. It is found in the synaptic vesicle membrane. The protein localises to the early endosome membrane. Its subcellular location is the late endosome membrane. It localises to the lysosome membrane. The protein resides in the cell membrane. The catalysed reaction is Zn(2+)(in) = Zn(2+)(out). In terms of biological role, zinc ion transporter that mediates zinc efflux and plays a crucial role in intracellular zinc homeostasis. Binds the divalent cations Zn(2+), Ni(2+), and to a minor extent Cu(2+). Is a functional modulator of P2X purinoceptors, including P2RX1, P2RX3, P2RX4 and P2RX7. Plays a role in central nervous system development and is required for myelination, and survival and proliferation of oligodendrocytes. The polypeptide is Transmembrane protein 163 (Tmem163) (Rattus norvegicus (Rat)).